The following is a 318-amino-acid chain: Aspartate carbamoyltransferase catalytic subunit (318 aa).

The carbamoyl phosphate site is built by arginine 59 and threonine 60. Position 87 (lysine 87) interacts with L-aspartate. Carbamoyl phosphate-binding residues include arginine 109, histidine 137, and glutamine 140. Residues arginine 170 and arginine 224 each coordinate L-aspartate. Residues glycine 265 and proline 266 each coordinate carbamoyl phosphate.

Belongs to the aspartate/ornithine carbamoyltransferase superfamily. ATCase family. As to quaternary structure, heterododecamer (2C3:3R2) of six catalytic PyrB chains organized as two trimers (C3), and six regulatory PyrI chains organized as three dimers (R2).

The enzyme catalyses carbamoyl phosphate + L-aspartate = N-carbamoyl-L-aspartate + phosphate + H(+). Its pathway is pyrimidine metabolism; UMP biosynthesis via de novo pathway; (S)-dihydroorotate from bicarbonate: step 2/3. Functionally, catalyzes the condensation of carbamoyl phosphate and aspartate to form carbamoyl aspartate and inorganic phosphate, the committed step in the de novo pyrimidine nucleotide biosynthesis pathway. In Rhizobium johnstonii (strain DSM 114642 / LMG 32736 / 3841) (Rhizobium leguminosarum bv. viciae), this protein is Aspartate carbamoyltransferase catalytic subunit.